The sequence spans 640 residues: Serine/threonine-protein phosphatase with EF-hands 1 (640 aa).

The region spanning 16–45 (VVRAALIIQNWYRRYRARLSARQHYALAIF) is the IQ domain. The catalytic stretch occupies residues 122–445 (INLLLQAFKQ…PQFFQYQVTS (324 aa)). Positions 173, 175, 202, and 234 each coordinate Mn(2+). The active-site Proton donor is His-235. Mn(2+) contacts are provided by His-286 and His-393. EF-hand domains are found at residues 473–508 (ARKTDLINAFELRDHSRTGKISLAQWAFSMESILGL), 556–591 (RYRSDLKIIFNIIDTDQSGLISMDEFRTMWKLFNAH), and 596–631 (IDDSQIDELASTMDSNKDGNIDFNEFLRAFYVVHKY). Positions 569, 571, 573, 580, 609, 611, 613, 615, and 620 each coordinate Ca(2+).

It belongs to the PPP phosphatase family. Mn(2+) is required as a cofactor. Mg(2+) serves as cofactor.

It carries out the reaction O-phospho-L-seryl-[protein] + H2O = L-seryl-[protein] + phosphate. The catalysed reaction is O-phospho-L-threonyl-[protein] + H2O = L-threonyl-[protein] + phosphate. With respect to regulation, activated by calcium. Functionally, may have a role in the recovery or adaptation response of photoreceptors. May have a role in development. The sequence is that of Serine/threonine-protein phosphatase with EF-hands 1 (Ppef1) from Rattus norvegicus (Rat).